Reading from the N-terminus, the 376-residue chain is Probable transcription factor At1g61730 (376 aa).

The segment at 1-150 (MTKKLNPLED…RVKKDEESVK (150 aa)) is disordered. Acidic residues predominate over residues 17-40 (SDEDDVETSEAGEASDDSSSSEED). S49 is modified (phosphoserine). Residues 49-72 (SPSATTAAAPPAKSTAVSTAADSD) are compositionally biased toward low complexity. Positions 73-83 (SGSETETDSDS) are enriched in acidic residues. Residues 87 to 103 (NPPNSGSGKTIALNTVN) are compositionally biased toward polar residues.

This sequence belongs to the GeBP family. As to quaternary structure, interacts with DEK3.

The polypeptide is Probable transcription factor At1g61730 (Arabidopsis thaliana (Mouse-ear cress)).